Here is a 465-residue protein sequence, read N- to C-terminus: 23S rRNA (uracil(1939)-C(5))-methyltransferase RlmD (465 aa).

Positions 1-22 are disordered; the sequence is MSEAVPTSARKSRNAPVAPGPA. Positions 16 to 80 constitute a TRAM domain; that stretch reads PVAPGPAPVL…PSYEQATVVD (65 aa). [4Fe-4S] cluster is bound by residues Cys-93, Cys-99, Cys-102, and Cys-181. S-adenosyl-L-methionine contacts are provided by Gln-289, Phe-318, Asn-323, Glu-339, Asn-367, and Asp-388. Residue Cys-421 is the Nucleophile of the active site.

Belongs to the class I-like SAM-binding methyltransferase superfamily. RNA M5U methyltransferase family. RlmD subfamily.

The catalysed reaction is uridine(1939) in 23S rRNA + S-adenosyl-L-methionine = 5-methyluridine(1939) in 23S rRNA + S-adenosyl-L-homocysteine + H(+). In terms of biological role, catalyzes the formation of 5-methyl-uridine at position 1939 (m5U1939) in 23S rRNA. This chain is 23S rRNA (uracil(1939)-C(5))-methyltransferase RlmD, found in Burkholderia lata (strain ATCC 17760 / DSM 23089 / LMG 22485 / NCIMB 9086 / R18194 / 383).